We begin with the raw amino-acid sequence, 243 residues long: Ribonuclease PH (243 aa).

Residues Arg-91 and 129–131 (GTR) contribute to the phosphate site.

Belongs to the RNase PH family. Homohexameric ring arranged as a trimer of dimers.

The catalysed reaction is tRNA(n+1) + phosphate = tRNA(n) + a ribonucleoside 5'-diphosphate. Phosphorolytic 3'-5' exoribonuclease that plays an important role in tRNA 3'-end maturation. Removes nucleotide residues following the 3'-CCA terminus of tRNAs; can also add nucleotides to the ends of RNA molecules by using nucleoside diphosphates as substrates, but this may not be physiologically important. Probably plays a role in initiation of 16S rRNA degradation (leading to ribosome degradation) during starvation. The chain is Ribonuclease PH from Burkholderia thailandensis (strain ATCC 700388 / DSM 13276 / CCUG 48851 / CIP 106301 / E264).